We begin with the raw amino-acid sequence, 357 residues long: MDEQTGTFNPRVLWPDVIRLPQNRWIFTCKEIIDRLGTDVHKTAEMKKLMEKCLMYLYFMKKSLNLFDYTYVEASILFFRYWYYYGLSYNLLDSIHISQAILVTACKTMENNRPIDAYVKSTCEFVTIHKIPVGNAGPRPNMDKLKWEFRDRLVKNEKKLLCQFGFDFNDGVGNARELIEEIFSGFYRFNRDDILPDEFKKTAFPKILQESRMFIVQGMTQPVTLLCDGYKFVVMSLIYCGLEYKRLVDKNFRYPKNFFSRVLLPSLKFNTQELVETFMDYRILEDNFFDLKSNKGSKLHISEEMIRNITDEDNDFCHSNEELFDYEHIREGNVSKEFMEHIQSKVDAMYEKYKTKV.

In terms of assembly, belongs to the BUR kinase complex.

It is found in the nucleus. Its function is as follows. Component of the BUR kinase complex involved in transcription regulation. This complex phosphorylates the UBC2/RAD6 ubiquitin-conjugating enzyme (E2), leading to monoubiquitination of histone H2B and the silencing of telomeric-associated genes. Also required for histone H3 methylation. Necessary for the recovery from pheromone-induced growth arrest in the cell cycle G1 phase. The kinase activity of the complex requires the presence of BUR2. Overexpression of BUR2 interferes with mitotic chromosome segregation. This chain is Protein BUR2 (BUR2), found in Candida glabrata (strain ATCC 2001 / BCRC 20586 / JCM 3761 / NBRC 0622 / NRRL Y-65 / CBS 138) (Yeast).